Reading from the N-terminus, the 476-residue chain is Retinoic acid receptor gamma (476 aa).

The segment at 1-109 (MANSSKERLC…PPPPPRVYKP (109 aa)) is modulating. A compositionally biased stretch (low complexity) spans 81 to 96 (STVETQSTSSEEMVPS). A disordered region spans residues 81–102 (STVETQSTSSEEMVPSSPSPPP). NR C4-type zinc fingers lie at residues 110–130 (CFVC…CEGC) and 146–170 (CHRD…LQKC). A DNA-binding region (nuclear receptor) is located at residues 110 to 175 (CFVCNDKSSG…RLQKCFQVGM (66 aa)). The tract at residues 176 to 205 (SKEAVRNDRNKKKKEIKEEVVLPDSYEMPP) is hinge. A Nuclear localization signal motif is present at residues 184–189 (RNKKKK). Positions 206 to 440 (EMEELIQKVS…PLIREMLENP (235 aa)) constitute an NR LBD domain. Residues 435-476 (EMLENPEAFEDGAATPKPSERSSSESSNGSPTGEDSSGSKTP) are disordered. The span at 462 to 476 (NGSPTGEDSSGSKTP) shows a compositional bias: polar residues.

This sequence belongs to the nuclear hormone receptor family. NR1 subfamily. As to quaternary structure, heterodimer; with a rxr molecule. Binds DNA preferentially as a rar/rxr heterodimer. As to expression, expressed in embryos, tadpoles and various adult tissue such as kidney, testis, brain, liver, skeletal muscle and spleen.

It localises to the nucleus. Functionally, receptor for retinoic acid. Retinoic acid receptors bind as heterodimers to their target response elements in response to their ligands, all-trans or 9-cis retinoic acid, and regulate gene expression in various biological processes. The rar/rxr heterodimers bind to the retinoic acid response elements (RARE) composed of tandem 5'-AGGTCA-3' sites known as DR1-DR5. The chain is Retinoic acid receptor gamma (rarg) from Xenopus laevis (African clawed frog).